We begin with the raw amino-acid sequence, 972 residues long: MSEDVLLEEDIWEYKSIRKRKPQSNPDSTSVSMQTVTKGKCRPKRKGSGNRKKSVEKNSTPQKSEQRLRPSEDLDPCKDDSSVYAQESVSSLTEQGSPSTRPVCDGYCPSCQMPFSLLVVQTPRWHVAECLDTPGSVEKECPDGLLCTSTIPSHYKRYSHFLLAASRAGEYLVNSTANTVERKMTCSTAAKSSCFPSPVEDSQAEKPSKNLKNVPNNECTSKIKDSEQRKSLNITSESTSSFADVQKPQQVFQLTQTTDNSCKFEFYDFTSSQESVSEDLCSQKDTSQPSLLQSKADFSDWEISYSPLSTCEESEGEAEEEKEVKTSQNKLLKVQNFEGPESNTEVFKFKKQHCEEINTSSCLYHSEKSASQSHVDSKCSNSPCVDNQQEMLSAESSFPLNCNQEFQQPGLLSPAINTGNKESQDKGACVLDSVYSCLTRTQSLLLTEGGRSPLSQKNKVLRAPSVVLTNTDKMTADATEKGTCQESLQPAVKKEENLDSTGVCFPSPISKTVSSHSLASMNAKSSPAKELKQMDIGVFFGLKPKVKEESKGEACLSEGKQIPSSVAPSGKRPRQQKRKAEGSVEDLEAVEESSNKDGGDANVTSGGQRKWRKRFRESSTTDEGARKKQCPFYKKIPGTGFTVDAFQYGEIEGCTAYFLTHFHSDHYCGLTKNFVFPLYCNKITGNLVKSKLRVKEQYINVLPMDTECIVNGIKVLLLDANHCPGATMILFYLPSGTAILHTGDFRADPSMERYPALIGQKIHTLYLDTTYCSPEYTFPSQQEVIQFAVNTAFEMVTLNPRTLVVCGTYSIGKEKVFLAIAEVLGSKASMSRDKYKTLQCLESAAVNSLITMNWDGTLLHILPMMQINFKGLQDHLNKFSENFDQVLAFKPTGWTYSDSCLSVMDIKPQTRGNITIYGIPYSEHSSYLEMKRFVQWLKPQKIIPTVNVGDWRARSLMEKHFRDWMIEGSGHK.

Positions 14–80 (YKSIRKRKPQ…SEDLDPCKDD (67 aa)) are disordered. A compositionally biased stretch (polar residues) spans 23–37 (QSNPDSTSVSMQTVT). Residues 39-54 (GKCRPKRKGSGNRKKS) are compositionally biased toward basic residues. The span at 64-80 (SEQRLRPSEDLDPCKDD) shows a compositional bias: basic and acidic residues. The UBZ4-type zinc finger occupies 105–135 (DGYCPSCQMPFSLLVVQTPRWHVAECLDTPG). Zn(2+) contacts are provided by C108, C111, H126, and C130. 2 disordered regions span residues 191-219 (KSSC…NNEC) and 552-623 (GEAC…TTDE). Residues 210 to 219 (NLKNVPNNEC) show a composition bias toward polar residues.

It belongs to the DNA repair metallo-beta-lactamase (DRMBL) family. As to quaternary structure, binds PIAS1.

Its subcellular location is the nucleus. It carries out the reaction a beta-lactam + H2O = a substituted beta-amino acid. In terms of biological role, may be required for DNA interstrand cross-link repair. This is DNA cross-link repair 1A protein (DCLRE1A) from Gallus gallus (Chicken).